Here is a 116-residue protein sequence, read N- to C-terminus: Carbohydrate-binding protein AQN-3 (116 aa).

Residues Cys9 and Cys30 are joined by a disulfide bond. A CUB domain is found at Cys9–Ile110. Asn50 is a glycosylation site (N-linked (GlcNAc...) asparagine). A disulfide bond links Cys53 and Cys74. The residue at position 85 (His85) is a Methylhistidine.

This sequence belongs to the spermadhesin family. In terms of processing, the residue at position 85 was identified as a methylhistidine by mass spectrometry.

It is found in the secreted. In terms of biological role, AQN proteins mediate the binding of boar spermatozoa to component(s) of the egg's zona pellucida by a carbohydrate-binding mechanism. AQN proteins are secretory components of the male accessory glands being coated to the sperm surface at the time of ejaculation. They possess as well heparin-, serine-protease-inhibitor-binding capability. The sequence is that of Carbohydrate-binding protein AQN-3 from Sus scrofa (Pig).